Reading from the N-terminus, the 549-residue chain is Dicarboxylate transporter 2.2, chloroplastic (549 aa).

The transit peptide at 1-54 (MESLALRSISLSASYLSLHRSSSKSFALLPPSISVHTSPTLRSLSISSPRFTLR) directs the protein to the chloroplast. Residues 57 to 79 (ASSLPEEQNKPQPPPPSPPQPQG) are disordered. Residues 67–77 (PQPPPPSPPQP) show a composition bias toward pro residues. A run of 12 helical transmembrane segments spans residues 79 to 99 (GAKLIPLAISVSIGLIVRFLI), 115 to 135 (IFLFTISGLVLGPLPVGAWAF), 151 to 171 (TAFAAFTNELIWLIAISFFFA), 220 to 240 (AGGVFLPVIKSLAISAGSYPG), 247 to 267 (LGSFLIQTQLQCSGASGAILL), 294 to 314 (WFKVASVPAFVSLLCTPLIIY), 344 to 364 (NEWIMLGAMAFTVSLWVFGEA), 365 to 385 (IGIASVVSAMIGLSTLLLLGV), 403 to 423 (WFAVLIGMAGQLTNLGVVAWM), 436 to 456 (LTWPASFIILQACYLLIHYLF), 470 to 490 (FLAMQIAAGVPGVLAALCLAF), and 523 to 543 (VGFVMALVQAIIWGGVGSFWW).

This sequence belongs to the SLC13A/DASS transporter (TC 2.A.47) family. DIT1 subfamily. As to expression, expressed in roots, rosette and cauline leaves, stems, flowers and siliques.

The protein localises to the plastid. It localises to the chloroplast inner membrane. Functionally, may be involved in the transport of dicarboxylate compounds. The sequence is that of Dicarboxylate transporter 2.2, chloroplastic (DIT2-2) from Arabidopsis thaliana (Mouse-ear cress).